The sequence spans 137 residues: Histone H2B.4 (137 aa).

The span at 1–37 (MAPKAEKKPAEKKPTEEKAEKKPRAEKRVPGKEGGEK) shows a compositional bias: basic and acidic residues. The disordered stretch occupies residues 1-45 (MAPKAEKKPAEKKPTEEKAEKKPRAEKRVPGKEGGEKKGKKKAKK). N6-acetyllysine is present on residues lysine 7 and lysine 27. A Glycyl lysine isopeptide (Lys-Gly) (interchain with G-Cter in ubiquitin) cross-link involves residue lysine 133.

It belongs to the histone H2B family. In terms of assembly, the nucleosome is a histone octamer containing two molecules each of H2A, H2B, H3 and H4 assembled in one H3-H4 heterotetramer and two H2A-H2B heterodimers. The octamer wraps approximately 147 bp of DNA. In terms of processing, can be acetylated to form H2BK6ac and H2BK33ac. Post-translationally, monoubiquitinated to form H2BK143ub1; may give a specific tag for epigenetic transcriptional activation.

The protein resides in the nucleus. Its subcellular location is the chromosome. Functionally, core component of nucleosome. Nucleosomes wrap and compact DNA into chromatin, limiting DNA accessibility to the cellular machineries which require DNA as a template. Histones thereby play a central role in transcription regulation, DNA repair, DNA replication and chromosomal stability. DNA accessibility is regulated via a complex set of post-translational modifications of histones, also called histone code, and nucleosome remodeling. In Zea mays (Maize), this protein is Histone H2B.4.